Consider the following 190-residue polypeptide: Elongation factor P-like protein (190 aa).

This sequence belongs to the elongation factor P family.

This is Elongation factor P-like protein from Edwardsiella ictaluri (strain 93-146).